Here is a 378-residue protein sequence, read N- to C-terminus: Probable methyltransferase At1g29790 (378 aa).

The Cytoplasmic portion of the chain corresponds to 1–6 (MAGFTM). A helical; Signal-anchor for type II membrane protein membrane pass occupies residues 7-29 (SLNLLLLVAMVATNILSLYHLSS). Residues 30–378 (TTNFFQSTVK…TALLQKPVAR (349 aa)) lie on the Lumenal side of the membrane. Residues 67–87 (TTHQPDKSTSTSTSRAAVSSS) are disordered. Residues 74–87 (STSTSTSRAAVSSS) are compositionally biased toward low complexity. The N-linked (GlcNAc...) asparagine glycan is linked to Asn247.

This sequence belongs to the methyltransferase superfamily.

Its subcellular location is the golgi apparatus membrane. The protein is Probable methyltransferase At1g29790 of Arabidopsis thaliana (Mouse-ear cress).